A 326-amino-acid chain; its full sequence is Transposase InsH for insertion sequence element IS5H (326 aa).

This sequence belongs to the transposase 11 family.

Involved in the transposition of the insertion sequence IS5. In Escherichia coli (strain K12), this protein is Transposase InsH for insertion sequence element IS5H (insH6).